Here is a 560-residue protein sequence, read N- to C-terminus: Glutamine--tRNA ligase (560 aa).

The 'HIGH' region motif lies at 36–46 (PEPNGFAHIGH). ATP-binding positions include 37-39 (EPN) and 43-49 (HIGHAKA). Residues Asp69 and Tyr214 each coordinate L-glutamine. 263–264 (RL) serves as a coordination point for ATP. A 'KMSKS' region motif is present at residues 270–274 (LTSKR).

It belongs to the class-I aminoacyl-tRNA synthetase family. In terms of assembly, monomer.

The protein resides in the cytoplasm. It catalyses the reaction tRNA(Gln) + L-glutamine + ATP = L-glutaminyl-tRNA(Gln) + AMP + diphosphate. This is Glutamine--tRNA ligase from Chromobacterium violaceum (strain ATCC 12472 / DSM 30191 / JCM 1249 / CCUG 213 / NBRC 12614 / NCIMB 9131 / NCTC 9757 / MK).